A 216-amino-acid polypeptide reads, in one-letter code: Octanoyltransferase (216 aa).

The BPL/LPL catalytic domain occupies 31–205 (STTRDEVWLV…ELVTLLDYEQ (175 aa)). Residues 70-77 (RGGQVTYH), 137-139 (SLG), and 150-152 (GLA) contribute to the substrate site. Catalysis depends on Cys-168, which acts as the Acyl-thioester intermediate.

It belongs to the LipB family.

It is found in the cytoplasm. It catalyses the reaction octanoyl-[ACP] + L-lysyl-[protein] = N(6)-octanoyl-L-lysyl-[protein] + holo-[ACP] + H(+). Its pathway is protein modification; protein lipoylation via endogenous pathway; protein N(6)-(lipoyl)lysine from octanoyl-[acyl-carrier-protein]: step 1/2. Functionally, catalyzes the transfer of endogenously produced octanoic acid from octanoyl-acyl-carrier-protein onto the lipoyl domains of lipoate-dependent enzymes. Lipoyl-ACP can also act as a substrate although octanoyl-ACP is likely to be the physiological substrate. This chain is Octanoyltransferase, found in Vibrio cholerae serotype O1 (strain ATCC 39541 / Classical Ogawa 395 / O395).